A 376-amino-acid chain; its full sequence is MEDPNRMLAHTGGMMAPQGYGLSGQDDGQNAGSENEVRKQKDIGEILQQIMSISEQSLDEAQARKHTLNCHRMKPALFSVLCEIKEKTVLSIRNTQEEEPPDPQLMRLDNMLIAEGVAGPEKGGGGAAAASAAAASQGGSLSIDGADNAIEHSDYRAKLAQIRQIYHQELEKYEQACNEFTTHVMNLLREQSRTRPITPKEIERMVQIIHKKFSSIQMQLKQSTCEAVMILRSRFLDARRKRRNFSKQASEILNEYFYSHLSNPYPSEEAKEELARKCGITVSQVSNWFGNKRIRYKKNIGKAQEEANLYAAKKAAGASPYSMAGPPSGTTTPMMSPAPPQDSMGYPMGSGGYDQQQPYDNSMGGYDPNLHQDLSP.

The disordered stretch occupies residues 1–37; that stretch reads MEDPNRMLAHTGGMMAPQGYGLSGQDDGQNAGSENEV. One can recognise a PBC domain in the interval 38-237; that stretch reads RKQKDIGEIL…VMILRSRFLD (200 aa). The PBC-A stretch occupies residues 45-124; sequence EILQQIMSIS…EGVAGPEKGG (80 aa). Residues 127-237 are PBC-B; it reads AAAASAAAAS…VMILRSRFLD (111 aa). The segment at residues 238–300 is a DNA-binding region (homeobox; TALE-type); it reads ARRKRRNFSK…NKRIRYKKNI (63 aa). Over residues 318 to 335 the composition is skewed to low complexity; sequence ASPYSMAGPPSGTTTPMM. The interval 318–376 is disordered; the sequence is ASPYSMAGPPSGTTTPMMSPAPPQDSMGYPMGSGGYDQQQPYDNSMGGYDPNLHQDLSP.

Belongs to the TALE/PBX homeobox family. As to quaternary structure, interacts with Ubx and hth. Prior to full germband retraction it is ubiquitously present, after germband retraction, mostly present in the anterior portion of the ventral nerve cord.

It localises to the nucleus. In terms of biological role, transcription factor which acts with the selector homeodomain proteins altering the regulation of downstream target genes such as wingless (wg), teashirt (tsh) and decapentaplegic (dpp), thus affecting segmental identity. Delimits the eye field and prevent inappropriate eye development. Required for proper localization of chordotonal organs within the peripheral nervous system. The polypeptide is Homeobox protein extradenticle (exd) (Drosophila melanogaster (Fruit fly)).